Consider the following 258-residue polypeptide: Small ribosomal subunit protein uS3 (258 aa).

The 70-residue stretch at 16-85 (IDEYLEKELE…NPQVEVKEVD (70 aa)) folds into the KH type-2 domain. A disordered region spans residues 198-258 (RVTETPAEEA…KDADGEESEK (61 aa)). The segment covering 203–245 (PAEEASEASEVVEDLEEVEDLEEIEDLEEVEDLEEVEDLEDTE) has biased composition (acidic residues).

This sequence belongs to the universal ribosomal protein uS3 family. Part of the 30S ribosomal subunit.

Binds the lower part of the 30S subunit head. This chain is Small ribosomal subunit protein uS3, found in Methanothermobacter thermautotrophicus (strain ATCC 29096 / DSM 1053 / JCM 10044 / NBRC 100330 / Delta H) (Methanobacterium thermoautotrophicum).